A 156-amino-acid chain; its full sequence is Anaerobic ribonucleoside-triphosphate reductase-activating protein (156 aa).

3 residues coordinate [4Fe-4S] cluster: cysteine 26, cysteine 30, and cysteine 33. S-adenosyl-L-methionine is bound by residues 32-34 and glycine 72; that span reads GCY.

This sequence belongs to the organic radical-activating enzymes family. Forms a tetramer composed of two NrdD and two NrdG subunits. Requires [4Fe-4S] cluster as cofactor.

It carries out the reaction glycyl-[protein] + reduced [flavodoxin] + S-adenosyl-L-methionine = glycin-2-yl radical-[protein] + semiquinone [flavodoxin] + 5'-deoxyadenosine + L-methionine + H(+). Its function is as follows. Activation of anaerobic ribonucleoside-triphosphate reductase under anaerobic conditions by generation of an organic free radical, using S-adenosylmethionine and reduced flavodoxin as cosubstrates to produce 5'-deoxy-adenosine. The polypeptide is Anaerobic ribonucleoside-triphosphate reductase-activating protein (NRDG) (Escherichia coli (Bacteriophage T4)).